Consider the following 321-residue polypeptide: MNSTDIIANVTKPFVENLTLGETAFYISCGIVGTVFNALVLWIALTYINTEDKPRQIIVINMTVADLLMCIVYMKTRPWLSHFNLWLCHPYYVIIWTCQMCSCLNLVWLNVDKLIYIQFPLHYYQIVNRKRLLWITAATWGGLYAMNIALVTFLKITRGSCLGVSLNPYVYLLSPIFYVVMILTSFSLSALIYCIAHNLTHMEERQRSKLFRRLFFLFSSTLWTFFTCLPYRLLYLFSIFCGETCQINNYYKTATNLFFRLLIVGIMINPVITIWTQRIYRLRLMRMFGRLRENSSTEVLMVSNRRASERPPEHTPLRCDM.

At 1 to 24 the chain is on the extracellular side; the sequence is MNSTDIIANVTKPFVENLTLGETA. N2, N9, and N17 each carry an N-linked (GlcNAc...) asparagine glycan. A helical membrane pass occupies residues 25–45; that stretch reads FYISCGIVGTVFNALVLWIAL. At 46–55 the chain is on the cytoplasmic side; sequence TYINTEDKPR. A helical transmembrane segment spans residues 56-76; it reads QIIVINMTVADLLMCIVYMKT. Residues 77 to 90 are Extracellular-facing; it reads RPWLSHFNLWLCHP. The cysteines at positions 88 and 161 are disulfide-linked. The helical transmembrane segment at 91–111 threads the bilayer; it reads YYVIIWTCQMCSCLNLVWLNV. Over 112–132 the chain is Cytoplasmic; that stretch reads DKLIYIQFPLHYYQIVNRKRL. A helical transmembrane segment spans residues 133–153; it reads LWITAATWGGLYAMNIALVTF. Residues 154-175 are Extracellular-facing; it reads LKITRGSCLGVSLNPYVYLLSP. Residues 176 to 196 form a helical membrane-spanning segment; that stretch reads IFYVVMILTSFSLSALIYCIA. Topologically, residues 197-221 are cytoplasmic; that stretch reads HNLTHMEERQRSKLFRRLFFLFSST. The chain crosses the membrane as a helical span at residues 222 to 242; the sequence is LWTFFTCLPYRLLYLFSIFCG. Over 243–254 the chain is Extracellular; sequence ETCQINNYYKTA. Residues 255–275 form a helical membrane-spanning segment; that stretch reads TNLFFRLLIVGIMINPVITIW. The Cytoplasmic portion of the chain corresponds to 276–321; sequence TQRIYRLRLMRMFGRLRENSSTEVLMVSNRRASERPPEHTPLRCDM.

The protein belongs to the G-protein coupled receptor 1 family. In terms of tissue distribution, expressed in the intestinal muscle, anal depressor, AVL and DVB GABAergic neurons, enteric muscles, the nerve ring, the ventral nerve cord and head mesodermal cells.

The protein resides in the cell membrane. It is found in the cell projection. Its subcellular location is the cilium. Its function is as follows. G-protein coupled receptor for the nlp-40 neuropeptide. The activity of this receptor is mediated by G proteins which activate adenylyl cyclase. Plays a role in the defecation motor program, which is a coordinated series of three muscle contractions that occurs every 45 seconds. Specifically, acts in GABAergic neurons, such as AVL and DVB, to control the expulsion step of defecation. Required for fatty acid uptake and metabolism by intestinal cells and therefore regulates the levels of triglycerides in the intestine. The chain is G-protein coupled receptor aex-2 from Caenorhabditis elegans.